Reading from the N-terminus, the 293-residue chain is Pyridoxal 5'-phosphate synthase subunit PdxS (293 aa).

Aspartate 23 is a D-ribose 5-phosphate binding site. The active-site Schiff-base intermediate with D-ribose 5-phosphate is the lysine 80. Residue glycine 152 coordinates D-ribose 5-phosphate. Arginine 164 provides a ligand contact to D-glyceraldehyde 3-phosphate. Residues glycine 213 and 234 to 235 contribute to the D-ribose 5-phosphate site; that span reads GS.

The protein belongs to the PdxS/SNZ family. In terms of assembly, in the presence of PdxT, forms a dodecamer of heterodimers.

It catalyses the reaction aldehydo-D-ribose 5-phosphate + D-glyceraldehyde 3-phosphate + L-glutamine = pyridoxal 5'-phosphate + L-glutamate + phosphate + 3 H2O + H(+). Its pathway is cofactor biosynthesis; pyridoxal 5'-phosphate biosynthesis. Catalyzes the formation of pyridoxal 5'-phosphate from ribose 5-phosphate (RBP), glyceraldehyde 3-phosphate (G3P) and ammonia. The ammonia is provided by the PdxT subunit. Can also use ribulose 5-phosphate and dihydroxyacetone phosphate as substrates, resulting from enzyme-catalyzed isomerization of RBP and G3P, respectively. This Niallia circulans (Bacillus circulans) protein is Pyridoxal 5'-phosphate synthase subunit PdxS.